A 319-amino-acid chain; its full sequence is MKTIAILTSGGDAPGMNACIRSIARTCIYNGIRVMGIRSGYDGLMNGNIYEMNVSSVADIIHRGGTILGSARCPEFKTEEGQKKGAQILKDFGIDGLVVLGGDGSFKGASALSKIGISTIGIPCTIDNDMGYTDYTIGFFTAVETVSDAISKLRDTSSSHGRANIIEVMGRNCGDIALYSGVASGAESILVPEVELNIDEVTEKIERGRKRGKLHHLIMLAEGVGGAYDIKNMIEEKTGVETKVTILGHVQRGGTPCTFDRLMATQMGNLAVKLIMEEKTDLAIAMKDNKIITVPIDEAVTTKRKFRDDLYEISKEISI.

Position 11 (G11) interacts with ATP. 21–25 (RSIAR) contributes to the ADP binding site. ATP contacts are provided by residues 72-73 (RC) and 102-105 (GDGS). D103 is a binding site for Mg(2+). Residue 125–127 (TID) coordinates substrate. D127 (proton acceptor) is an active-site residue. R154 is a binding site for ADP. Residues R162 and 169 to 171 (MGR) contribute to the substrate site. Residues 185–187 (GAE), R211, and 213–215 (KLH) each bind ADP. Substrate-binding positions include E222, K243, and 249 to 252 (HVQR).

The protein belongs to the phosphofructokinase type A (PFKA) family. ATP-dependent PFK group I subfamily. Prokaryotic clade 'B1' sub-subfamily. As to quaternary structure, homotetramer. Mg(2+) is required as a cofactor.

Its subcellular location is the cytoplasm. The enzyme catalyses beta-D-fructose 6-phosphate + ATP = beta-D-fructose 1,6-bisphosphate + ADP + H(+). The protein operates within carbohydrate degradation; glycolysis; D-glyceraldehyde 3-phosphate and glycerone phosphate from D-glucose: step 3/4. With respect to regulation, allosterically activated by ADP and other diphosphonucleosides, and allosterically inhibited by phosphoenolpyruvate. Its function is as follows. Catalyzes the phosphorylation of D-fructose 6-phosphate to fructose 1,6-bisphosphate by ATP, the first committing step of glycolysis. The chain is ATP-dependent 6-phosphofructokinase from Finegoldia magna (strain ATCC 29328 / DSM 20472 / WAL 2508) (Peptostreptococcus magnus).